The chain runs to 200 residues: Holliday junction branch migration complex subunit RuvA (200 aa).

The segment at M1–L63 is domain I. Residues T64–K142 form a domain II region. Residues K142–N146 form a flexible linker region. Residues I147 to F200 form a domain III region.

This sequence belongs to the RuvA family. In terms of assembly, homotetramer. Forms an RuvA(8)-RuvB(12)-Holliday junction (HJ) complex. HJ DNA is sandwiched between 2 RuvA tetramers; dsDNA enters through RuvA and exits via RuvB. An RuvB hexamer assembles on each DNA strand where it exits the tetramer. Each RuvB hexamer is contacted by two RuvA subunits (via domain III) on 2 adjacent RuvB subunits; this complex drives branch migration. In the full resolvosome a probable DNA-RuvA(4)-RuvB(12)-RuvC(2) complex forms which resolves the HJ.

Its subcellular location is the cytoplasm. Functionally, the RuvA-RuvB-RuvC complex processes Holliday junction (HJ) DNA during genetic recombination and DNA repair, while the RuvA-RuvB complex plays an important role in the rescue of blocked DNA replication forks via replication fork reversal (RFR). RuvA specifically binds to HJ cruciform DNA, conferring on it an open structure. The RuvB hexamer acts as an ATP-dependent pump, pulling dsDNA into and through the RuvAB complex. HJ branch migration allows RuvC to scan DNA until it finds its consensus sequence, where it cleaves and resolves the cruciform DNA. This chain is Holliday junction branch migration complex subunit RuvA, found in Rickettsia typhi (strain ATCC VR-144 / Wilmington).